A 206-amino-acid polypeptide reads, in one-letter code: Macrophage immunometabolism regulator (206 aa).

The protein belongs to the UNC119-binding protein family. Interacts with unc119 family proteins; interaction preferentially takes place when unc119 proteins are unliganded with myristoylated proteins.

It is found in the cytoplasm. The protein localises to the cell projection. The protein resides in the cilium. Functionally, may play a role in immune regulation through regulation of the macrophage function. Involved in the recruitment of macrophages in response to injury. May also play a role in trafficking of proteins via its interaction with unc119 family cargo adapters. May play a role in ciliary membrane localization. In terms of biological role, regulates the macrophage function, by enhancing the resolution of inflammation and wound repair functions mediated by M2 macrophages. The regulation of macrophage function is, due at least in part, to the role of C5orf30 in regulating ability to inhibit glycolysis. Probably plays alaso a role in trafficking of proteins via its interaction with UNC119 and UNC119B cargo adapters: may help the release of UNC119 and UNC119B cargo or the recycling of UNC119 and UNC119B. May play a role in ciliary membrane localization via its interaction with UNC119B and protein transport into photoreceptor cells. This is Macrophage immunometabolism regulator (macir) from Danio rerio (Zebrafish).